Consider the following 514-residue polypeptide: Mitochondrial-processing peptidase subunit alpha (514 aa).

Residues 1-55 (MLLRKSIPYIKICRDISASVRNNKEIAQKLPLSVPLPMENNSKSIEKGCPPMGRN) constitute a mitochondrion transit peptide.

This sequence belongs to the peptidase M16 family. In terms of assembly, heterodimer of mppa-1 (alpha) and mppb-1 (beta) subunits, forming the mitochondrial processing protease (MPP) in which mppa-1 is involved in substrate recognition and binding and mppb-1 is the catalytic subunit.

It localises to the mitochondrion matrix. Substrate recognition and binding subunit of the essential mitochondrial processing protease (MPP), which cleaves the mitochondrial sequence off newly imported precursors proteins. This Caenorhabditis elegans protein is Mitochondrial-processing peptidase subunit alpha.